Consider the following 142-residue polypeptide: Large ribosomal subunit protein uL11 (142 aa).

Ala-2 is subject to N,N,N-trimethylalanine. An N6,N6,N6-trimethyllysine mark is found at Lys-4 and Lys-40.

The protein belongs to the universal ribosomal protein uL11 family. Part of the ribosomal stalk of the 50S ribosomal subunit. Interacts with L10 and the large rRNA to form the base of the stalk. L10 forms an elongated spine to which L12 dimers bind in a sequential fashion forming a multimeric L10(L12)X complex. Post-translationally, one or more lysine residues are methylated.

Functionally, forms part of the ribosomal stalk which helps the ribosome interact with GTP-bound translation factors. This is Large ribosomal subunit protein uL11 from Shigella flexneri.